A 403-amino-acid chain; its full sequence is MCSIGEDDFGDEGGTHAMVAGSVPSGIDLSPGECSKCDISSDELFQLNFRTPECRDCFLAYVRHKFRAALGAAKVLPRDAEVLLVVDGSAESLVLLDMLYYAQTQNTFKRLHCSARMVYLEDQPVQGRDPADLESLEALSKRYEAFEFYVITLGLPVGSLKLLKDYSPVAQESNELIQKLSQLRSLTSRQDYLQQQRKNLIASVAQKLHCSHVFNSSISVDLATQLLTSIALGRGGSAALDVALLDDRLAAGIKLLRPLKDLTEQEVQFYVHAQRLQPLLMASSRYGQELGDAASLQNLTSAFVANLQKNFSSTVSTVFRTGGKISESTHPEQAKCNHCQSALDVELSDTLLAIEYSRSVSEAGVRLNEAIEDPEIISKRRMKLNDELCHACSSIEADFKNGS.

Belongs to the CTU2/NCS2 family.

It is found in the cytoplasm. Its pathway is tRNA modification; 5-methoxycarbonylmethyl-2-thiouridine-tRNA biosynthesis. Plays a central role in 2-thiolation of mcm(5)S(2)U at tRNA wobble positions of tRNA(Lys), tRNA(Glu) and tRNA(Gln). May act by forming a heterodimer with NCS6/CTU1 that ligates sulfur from thiocarboxylated URM1 onto the uridine of tRNAs at wobble position. The polypeptide is Cytoplasmic tRNA 2-thiolation protein 2 (Drosophila ananassae (Fruit fly)).